A 522-amino-acid chain; its full sequence is Cytochrome P450 monooxygenase sirB (522 aa).

The helical transmembrane segment at 22 to 42 (ASAILFCTLLTVFLFISQGTV) threads the bilayer. Asn-191 carries N-linked (GlcNAc...) asparagine glycosylation. The helical transmembrane segment at 304-324 (VLHLSFAATGTVAILITHMIY) threads the bilayer. Cys-462 contacts heme.

It belongs to the cytochrome P450 family. Requires heme as cofactor.

It is found in the membrane. It participates in mycotoxin biosynthesis. Functionally, cytochrome P450 monooxygenase; part of the gene cluster that mediates the biosynthesis of sirodesmin PL, an epipolythiodioxopiperazine (ETP) characterized by a disulfide bridged cyclic dipeptide and that acts as a phytotoxin which is involved in the blackleg didease of canola. SirD catalyzes the O-prenylation of L-tyrosine (L-Tyr) in the presence of dimethylallyl diphosphate (DMAPP) to yield 4-O-dimethylallyl-L-Tyr, and therefore represents probably the first pathway-specific enzyme in the biosynthesis of sirodesmin PL. 4-O-dimethylallyl-L-Tyr, then undergoes condensation with L-Ser in a reaction catalyzed by the non-ribosomal peptide synthase sirP to form the diketopiperazine (DKP) backbone. Further bishydroxylation of the DKP performed by the cytochrome P450 monooxygenase sirC leads to the production of the intermediate phomamide. This step is essential to form the reactive thiol group required for toxicity of sirodesmin PL. The next steps of sirodesmin biosynthesis are not well understood yet, but some predictions could be made from intermediate compounds identification. Phomamide is converted into phomalizarine via oxidation, probably by sirT. Further oxidation, methylation (by sirM or sirN) and reduction steps convert phomalizarine to deacetyl sirodesmin. Finally, acetyltransferase sirH probably acetylates deacetyl sirodesmin to produce sirodesmin PL. The polypeptide is Cytochrome P450 monooxygenase sirB (Leptosphaeria maculans (Blackleg fungus)).